The following is a 171-amino-acid chain: NADH-quinone oxidoreductase subunit B (171 aa).

[4Fe-4S] cluster is bound by residues cysteine 34, cysteine 35, cysteine 99, and cysteine 128.

Belongs to the complex I 20 kDa subunit family. As to quaternary structure, NDH-1 is composed of 14 different subunits. Subunits NuoB, C, D, E, F, and G constitute the peripheral sector of the complex. The cofactor is [4Fe-4S] cluster.

Its subcellular location is the cell inner membrane. It carries out the reaction a quinone + NADH + 5 H(+)(in) = a quinol + NAD(+) + 4 H(+)(out). Its function is as follows. NDH-1 shuttles electrons from NADH, via FMN and iron-sulfur (Fe-S) centers, to quinones in the respiratory chain. The immediate electron acceptor for the enzyme in this species is believed to be ubiquinone. Couples the redox reaction to proton translocation (for every two electrons transferred, four hydrogen ions are translocated across the cytoplasmic membrane), and thus conserves the redox energy in a proton gradient. The polypeptide is NADH-quinone oxidoreductase subunit B (Sulfurihydrogenibium sp. (strain YO3AOP1)).